A 251-amino-acid polypeptide reads, in one-letter code: Adenosine 5'-phosphosulfate reductase (251 aa).

Cys121, Cys122, Cys204, and Cys207 together coordinate [4Fe-4S] cluster. The Nucleophile; cysteine thiosulfonate intermediate role is filled by Cys232.

The protein belongs to the PAPS reductase family. CysH subfamily. [4Fe-4S] cluster serves as cofactor.

The protein localises to the cytoplasm. It catalyses the reaction [thioredoxin]-disulfide + sulfite + AMP + 2 H(+) = adenosine 5'-phosphosulfate + [thioredoxin]-dithiol. Its pathway is sulfur metabolism; hydrogen sulfide biosynthesis; sulfite from sulfate. Catalyzes the formation of sulfite from adenosine 5'-phosphosulfate (APS) using thioredoxin as an electron donor. The chain is Adenosine 5'-phosphosulfate reductase from Sinorhizobium fredii (strain USDA 257).